We begin with the raw amino-acid sequence, 163 residues long: Transcriptional repressor NrdR (163 aa).

The tract at residues 1 to 22 (MRCPKCQSLKSSVIDSRQAEDG) is disordered. Residues 3 to 34 (CPKCQSLKSSVIDSRQAEDGNTIRRRRSCDQC) fold into a zinc finger. One can recognise an ATP-cone domain in the interval 49–139 (LVVVKKDGTR…VYRSFKDVGE (91 aa)).

The protein belongs to the NrdR family. The cofactor is Zn(2+).

Functionally, negatively regulates transcription of bacterial ribonucleotide reductase nrd genes and operons by binding to NrdR-boxes. This Streptococcus suis (strain 98HAH33) protein is Transcriptional repressor NrdR.